Consider the following 46-residue polypeptide: Escargot/snail protein homolog (46 aa).

3 C2H2-type zinc fingers span residues 1 to 4 (IRTH), 8 to 30 (CKCP…TTHH), and 36 to 46 (FSCQHCNRAFA).

It belongs to the snail C2H2-type zinc-finger protein family.

The protein localises to the nucleus. This Oryzias latipes (Japanese rice fish) protein is Escargot/snail protein homolog.